The primary structure comprises 262 residues: MSRSNQEALADFVADAPPGELNQVVEAISTVVDGNSSILSKLETDVHNKILDQCMVVSLGKSKSLVSKYNQLSKDTFYDSQSGQKFEFDFDTKKATPSGSHGSDSPIQGALDKYFSAHFPSEGAAGVFPQDDGSIALVLVDGKYNPANYWNGKWRSVYIFESGSLSGTIDVDVHYYEDGNVRLKSSEKVDLGSVSESDIVDAISKAEQQFQEKLNKSFNGLNEDSFKALRRQLPVTRSKINWGKSISNYRLGKDINVGGGRE.

It belongs to the F-actin-capping protein alpha subunit family. In terms of assembly, heterodimer of an alpha and a beta subunit.

The protein resides in the cytoplasm. It localises to the cytoskeleton. Its function is as follows. F-actin-capping proteins bind in a Ca(2+)-independent manner to the fast growing ends of actin filaments (barbed end) thereby blocking the exchange of subunits at these ends. Unlike other capping proteins (such as gelsolin and severin), these proteins do not sever actin filaments. This chain is F-actin-capping protein subunit alpha (CAP1), found in Yarrowia lipolytica (strain CLIB 122 / E 150) (Yeast).